Reading from the N-terminus, the 305-residue chain is Sulfate adenylyltransferase subunit 2 (305 aa).

This sequence belongs to the PAPS reductase family. CysD subfamily. As to quaternary structure, heterodimer composed of CysD, the smaller subunit, and CysN.

It catalyses the reaction sulfate + ATP + H(+) = adenosine 5'-phosphosulfate + diphosphate. The protein operates within sulfur metabolism; hydrogen sulfide biosynthesis; sulfite from sulfate: step 1/3. With CysN forms the ATP sulfurylase (ATPS) that catalyzes the adenylation of sulfate producing adenosine 5'-phosphosulfate (APS) and diphosphate, the first enzymatic step in sulfur assimilation pathway. APS synthesis involves the formation of a high-energy phosphoric-sulfuric acid anhydride bond driven by GTP hydrolysis by CysN coupled to ATP hydrolysis by CysD. The polypeptide is Sulfate adenylyltransferase subunit 2 (Stutzerimonas stutzeri (strain A1501) (Pseudomonas stutzeri)).